Here is a 282-residue protein sequence, read N- to C-terminus: Phosphatidylserine decarboxylase proenzyme (282 aa).

Active-site charge relay system; for autoendoproteolytic cleavage activity residues include aspartate 88, histidine 144, and serine 247. Serine 247 functions as the Schiff-base intermediate with substrate; via pyruvic acid; for decarboxylase activity in the catalytic mechanism. Serine 247 carries the pyruvic acid (Ser); by autocatalysis modification.

This sequence belongs to the phosphatidylserine decarboxylase family. PSD-B subfamily. Prokaryotic type I sub-subfamily. Heterodimer of a large membrane-associated beta subunit and a small pyruvoyl-containing alpha subunit. The cofactor is pyruvate. In terms of processing, is synthesized initially as an inactive proenzyme. Formation of the active enzyme involves a self-maturation process in which the active site pyruvoyl group is generated from an internal serine residue via an autocatalytic post-translational modification. Two non-identical subunits are generated from the proenzyme in this reaction, and the pyruvate is formed at the N-terminus of the alpha chain, which is derived from the carboxyl end of the proenzyme. The autoendoproteolytic cleavage occurs by a canonical serine protease mechanism, in which the side chain hydroxyl group of the serine supplies its oxygen atom to form the C-terminus of the beta chain, while the remainder of the serine residue undergoes an oxidative deamination to produce ammonia and the pyruvoyl prosthetic group on the alpha chain. During this reaction, the Ser that is part of the protease active site of the proenzyme becomes the pyruvoyl prosthetic group, which constitutes an essential element of the active site of the mature decarboxylase.

It localises to the cell membrane. It carries out the reaction a 1,2-diacyl-sn-glycero-3-phospho-L-serine + H(+) = a 1,2-diacyl-sn-glycero-3-phosphoethanolamine + CO2. It participates in phospholipid metabolism; phosphatidylethanolamine biosynthesis; phosphatidylethanolamine from CDP-diacylglycerol: step 2/2. Catalyzes the formation of phosphatidylethanolamine (PtdEtn) from phosphatidylserine (PtdSer). The protein is Phosphatidylserine decarboxylase proenzyme of Xanthomonas campestris pv. campestris (strain 8004).